Here is a 215-residue protein sequence, read N- to C-terminus: Thiamine import ATP-binding protein ThiQ (215 aa).

Residues 2–215 form the ABC transporter domain; that stretch reads IYLNNVILND…GQISQLQKGV (214 aa). Residue 32–39 coordinates ATP; it reads GESGAGKS.

Belongs to the ABC transporter superfamily. Thiamine importer (TC 3.A.1.19.1) family. In terms of assembly, the complex is composed of two ATP-binding proteins (ThiQ), two transmembrane proteins (ThiP) and a solute-binding protein (ThiB).

The protein localises to the cell inner membrane. It catalyses the reaction thiamine(out) + ATP + H2O = thiamine(in) + ADP + phosphate + H(+). Its function is as follows. Part of the ABC transporter complex ThiBPQ involved in thiamine import. Responsible for energy coupling to the transport system. This chain is Thiamine import ATP-binding protein ThiQ, found in Haemophilus influenzae (strain 86-028NP).